A 681-amino-acid polypeptide reads, in one-letter code: T-box brain protein 1 (681 aa).

Disordered stretches follow at residues 43–83 (TDNL…RSKL) and 108–127 (SQSS…FPYP). Polar residues predominate over residues 58-68 (GMTNQSDTDNF). The segment covering 108–122 (SQSSQPQSAATAPSA) has biased composition (low complexity). The segment at residues 213-393 (LWLKFHRHQT…HNPFAKGFRD (181 aa)) is a DNA-binding region (T-box). Thr408 is subject to Phosphothreonine. Ser410 carries the phosphoserine modification. Residues 447-483 (PGAGAGPGPGTDRSVPHTNGLLSPQQAEDPGAPSPQR) form a disordered region. Residues 462-472 (PHTNGLLSPQQ) show a composition bias toward polar residues. Residue Ser594 is modified to Phosphoserine. The disordered stretch occupies residues 597–655 (APAAEDAKPKDLSDSSWIETPSSIKSIDSSDSGIYEQAKRRRISPADTPVSESSSPLKS). A compositionally biased stretch (low complexity) spans 618 to 628 (SSIKSIDSSDS). Residue Ser640 is modified to Phosphoserine.

As to quaternary structure, homodimer. Part of a complex containing CASK, TBR1 and TSPYL2; may modulate gene expression in response to neuronal synaptic activity. Forms homodimers. Interacts with FOXP2. Interacts with FOXP1. Interacts with BCL11A. Expressed in the developing and adult cortex. Expressed in the olfactory bulbs.

The protein localises to the nucleus. In terms of biological role, transcriptional repressor involved in multiple aspects of cortical development, including neuronal migration, laminar and areal identity, and axonal projection. As transcriptional repressor of FEZF2, it blocks the formation of the corticospinal (CS) tract from layer 6 projection neurons, thereby restricting the origin of CS axons specifically to layer 5 neurons. The protein is T-box brain protein 1 (Tbr1) of Mus musculus (Mouse).